A 191-amino-acid chain; its full sequence is Ciliary microtubule-associated protein 3 (191 aa).

In terms of assembly, interacts with proteins involved in ciliary transport, including ARL13B, CETN1, KIF3A, RAB6A, RAB8A, TUBB1 and TUBG1. Interacts with AURKA.

It localises to the cytoplasmic vesicle. It is found in the golgi apparatus. Its subcellular location is the trans-Golgi network. The protein localises to the cytoplasm. Its function is as follows. During primary cilia disassembly, involved in cilia disassembly. Required specifically to control cilia retraction as well as the liberation and duplication of the basal body/centrosome. May act by stimulating AURKA activity at the basal body in a cell cycle-dependent manner. In Homo sapiens (Human), this protein is Ciliary microtubule-associated protein 3.